Reading from the N-terminus, the 316-residue chain is Probable cell division protein WhiA (316 aa).

Positions 274–308 form a DNA-binding region, H-T-H motif; sequence SLKELGEMVSTGVISKSGVNHRLRKIDEIAEKLRN.

The protein belongs to the WhiA family.

Functionally, involved in cell division and chromosome segregation. The polypeptide is Probable cell division protein WhiA (Macrococcus caseolyticus (strain JCSC5402) (Macrococcoides caseolyticum)).